We begin with the raw amino-acid sequence, 286 residues long: 4-hydroxybenzoate octaprenyltransferase (286 aa).

Transmembrane regions (helical) follow at residues 20-40 (IGTL…AQGL), 43-63 (IKVL…GCII), 96-116 (LFTL…PLVV), 142-162 (FLGI…LGEV), 167-187 (WWLF…YAIV), 210-230 (QIIG…GLVA), 235-255 (IYGL…RLIF), and 266-286 (FLNN…DYMI).

Belongs to the UbiA prenyltransferase family. Mg(2+) serves as cofactor.

It localises to the cell inner membrane. It catalyses the reaction all-trans-octaprenyl diphosphate + 4-hydroxybenzoate = 4-hydroxy-3-(all-trans-octaprenyl)benzoate + diphosphate. It participates in cofactor biosynthesis; ubiquinone biosynthesis. Its function is as follows. Catalyzes the prenylation of para-hydroxybenzoate (PHB) with an all-trans polyprenyl group. Mediates the second step in the final reaction sequence of ubiquinone-8 (UQ-8) biosynthesis, which is the condensation of the polyisoprenoid side chain with PHB, generating the first membrane-bound Q intermediate 3-octaprenyl-4-hydroxybenzoate. This chain is 4-hydroxybenzoate octaprenyltransferase, found in Shewanella frigidimarina (strain NCIMB 400).